The following is a 90-amino-acid chain: Small ribosomal subunit protein uS15c (90 aa).

It belongs to the universal ribosomal protein uS15 family. Part of the 30S ribosomal subunit.

It is found in the plastid. It localises to the chloroplast. The sequence is that of Small ribosomal subunit protein uS15c (rps15) from Morus indica (Mulberry).